Reading from the N-terminus, the 41-residue chain is MKIKNSLKALKARHRDNQLVRRKGRVYIINKTAPRYKARQG.

The protein belongs to the bacterial ribosomal protein bL36 family.

This Mesorhizobium japonicum (strain LMG 29417 / CECT 9101 / MAFF 303099) (Mesorhizobium loti (strain MAFF 303099)) protein is Large ribosomal subunit protein bL36.